A 288-amino-acid chain; its full sequence is ATP synthase gamma chain (288 aa).

Belongs to the ATPase gamma chain family. F-type ATPases have 2 components, CF(1) - the catalytic core - and CF(0) - the membrane proton channel. CF(1) has five subunits: alpha(3), beta(3), gamma(1), delta(1), epsilon(1). CF(0) has three main subunits: a, b and c.

The protein localises to the cell membrane. Produces ATP from ADP in the presence of a proton gradient across the membrane. The gamma chain is believed to be important in regulating ATPase activity and the flow of protons through the CF(0) complex. The chain is ATP synthase gamma chain from Staphylococcus haemolyticus (strain JCSC1435).